We begin with the raw amino-acid sequence, 346 residues long: Dihydroorotase (346 aa).

The Zn(2+) site is built by H13 and H15. Residues 15–17 (HLR) and N41 each bind substrate. The Zn(2+) site is built by K99, H136, and H174. Position 99 is an N6-carboxylysine (K99). A substrate-binding site is contributed by H136. L219 serves as a coordination point for substrate. Residue D247 participates in Zn(2+) binding. Residue D247 is part of the active site. Residues H251 and A263 each coordinate substrate.

This sequence belongs to the metallo-dependent hydrolases superfamily. DHOase family. Class II DHOase subfamily. In terms of assembly, homodimer. The cofactor is Zn(2+).

The enzyme catalyses (S)-dihydroorotate + H2O = N-carbamoyl-L-aspartate + H(+). It functions in the pathway pyrimidine metabolism; UMP biosynthesis via de novo pathway; (S)-dihydroorotate from bicarbonate: step 3/3. In terms of biological role, catalyzes the reversible cyclization of carbamoyl aspartate to dihydroorotate. The polypeptide is Dihydroorotase (Rhizobium rhizogenes (strain K84 / ATCC BAA-868) (Agrobacterium radiobacter)).